Reading from the N-terminus, the 142-residue chain is ATP synthase epsilon chain (142 aa).

This sequence belongs to the ATPase epsilon chain family. As to quaternary structure, F-type ATPases have 2 components, CF(1) - the catalytic core - and CF(0) - the membrane proton channel. CF(1) has five subunits: alpha(3), beta(3), gamma(1), delta(1), epsilon(1). CF(0) has three main subunits: a, b and c.

The protein resides in the cell inner membrane. Its function is as follows. Produces ATP from ADP in the presence of a proton gradient across the membrane. This chain is ATP synthase epsilon chain, found in Histophilus somni (strain 129Pt) (Haemophilus somnus).